We begin with the raw amino-acid sequence, 478 residues long: Growth/differentiation factor 10 (478 aa).

A signal peptide spans 1–33 (MARGPARTSLGPGSQQLPLLSLLLLLLLRDADG). A disordered region spans residues 34–70 (SHTAAARPPPPAAADGLAGDKNPQRSPGDVAAAQSPG). Positions 34–368 (SHTAAARPPP…EKTMQKARKK (335 aa)) are excised as a propeptide. N-linked (GlcNAc...) asparagine glycosylation is found at Asn118, Asn155, and Asn280. A disordered region spans residues 267 to 345 (PFQAGDPEPG…GRKDRRKKGQ (79 aa)). The span at 291–301 (TQATGPLQNNE) shows a compositional bias: polar residues. Residues 331–343 (LKPRPGRKDRRKK) are compositionally biased toward basic residues. Cystine bridges form between Cys376–Cys443, Cys405–Cys475, and Cys409–Cys477. Asn469 carries N-linked (GlcNAc...) asparagine glycosylation.

This sequence belongs to the TGF-beta family. Homodimer or heterodimer. Can form a non-covalent complex of the mature region and the pro-region.

The protein resides in the secreted. Functionally, growth factor involved in osteogenesis and adipogenesis. Plays an inhibitory role in the process of osteoblast differentiation via SMAD2/3 pathway. Plays an inhibitory role in the process of adipogenesis. This chain is Growth/differentiation factor 10 (GDF10), found in Bos taurus (Bovine).